A 564-amino-acid chain; its full sequence is Phosphoinositide phospholipase C 3 (564 aa).

Positions 19 to 54 (TRQPPVSIKRLFEAYSRNGKMSFDELLRFVSEVQGE) constitute an EF-hand domain. The PI-PLC X-box domain occupies 106 to 250 (HDMKAPLSHY…LKGKILISTK (145 aa)). Catalysis depends on residues histidine 121 and histidine 167. Residues 296 to 412 (RDLIAIHAAN…GYVKKPRILL (117 aa)) form the PI-PLC Y-box domain. The C2 domain maps to 406-539 (KKPRILLDEH…KSGVRAVRLH (134 aa)). 5 residues coordinate Ca(2+): aspartate 450, aspartate 456, aspartate 509, aspartate 511, and aspartate 517.

Requires Ca(2+) as cofactor. Expressed in leaves, roots and siliques, but not in flowers.

Its subcellular location is the cell membrane. The catalysed reaction is a 1,2-diacyl-sn-glycero-3-phospho-(1D-myo-inositol-4,5-bisphosphate) + H2O = 1D-myo-inositol 1,4,5-trisphosphate + a 1,2-diacyl-sn-glycerol + H(+). Functionally, the production of the second messenger molecules diacylglycerol (DAG) and inositol 1,4,5-trisphosphate (IP3) is mediated by activated phosphatidylinositol-specific phospholipase C enzymes. The polypeptide is Phosphoinositide phospholipase C 3 (PLC3) (Arabidopsis thaliana (Mouse-ear cress)).